Consider the following 361-residue polypeptide: Phospho-N-acetylmuramoyl-pentapeptide-transferase (361 aa).

The next 10 membrane-spanning stretches (helical) occupy residues 26–46 (SILA…VLIQ), 73–93 (TMGG…WGDL), 98–118 (VWLV…DDWI), 139–159 (IFGL…AAVT), 168–188 (IALP…IVGF), 200–220 (GLAI…AYAS), 237–257 (AGDL…FLWF), 264–284 (VFMG…IAVI), 289–309 (LVLV…IIQV), and 339–359 (VIVR…ATLK).

The protein belongs to the glycosyltransferase 4 family. MraY subfamily. Requires Mg(2+) as cofactor.

The protein localises to the cell inner membrane. It catalyses the reaction UDP-N-acetyl-alpha-D-muramoyl-L-alanyl-gamma-D-glutamyl-meso-2,6-diaminopimeloyl-D-alanyl-D-alanine + di-trans,octa-cis-undecaprenyl phosphate = di-trans,octa-cis-undecaprenyl diphospho-N-acetyl-alpha-D-muramoyl-L-alanyl-D-glutamyl-meso-2,6-diaminopimeloyl-D-alanyl-D-alanine + UMP. It functions in the pathway cell wall biogenesis; peptidoglycan biosynthesis. Catalyzes the initial step of the lipid cycle reactions in the biosynthesis of the cell wall peptidoglycan: transfers peptidoglycan precursor phospho-MurNAc-pentapeptide from UDP-MurNAc-pentapeptide onto the lipid carrier undecaprenyl phosphate, yielding undecaprenyl-pyrophosphoryl-MurNAc-pentapeptide, known as lipid I. The polypeptide is Phospho-N-acetylmuramoyl-pentapeptide-transferase (Xylella fastidiosa (strain M12)).